The primary structure comprises 165 residues: RxLR effector protein CRE12 (165 aa).

The N-terminal stretch at 1 to 23 (MRLAAFVLVAVAFAIIPDGRVSA) is a signal peptide. Residues 40 to 59 (RLLRLNAVPQPVETGNQEER) carry the RxLR-dEER motif.

It belongs to the RxLR effector family.

The protein resides in the secreted. Its subcellular location is the host cell. Functionally, effector that is involved in host plant infection. Contributes to virulence during the early infection stage, by inhibiting plant defense responses induced by both PAMP-triggered immunity (PTI) and effector-triggered immunity (ETI). This is RxLR effector protein CRE12 from Phytophthora infestans (strain T30-4) (Potato late blight agent).